A 690-amino-acid chain; its full sequence is Glycine--tRNA ligase beta subunit (690 aa).

The protein belongs to the class-II aminoacyl-tRNA synthetase family. Tetramer of two alpha and two beta subunits.

The protein localises to the cytoplasm. It carries out the reaction tRNA(Gly) + glycine + ATP = glycyl-tRNA(Gly) + AMP + diphosphate. This chain is Glycine--tRNA ligase beta subunit, found in Lactobacillus gasseri (strain ATCC 33323 / DSM 20243 / BCRC 14619 / CIP 102991 / JCM 1131 / KCTC 3163 / NCIMB 11718 / NCTC 13722 / AM63).